A 288-amino-acid chain; its full sequence is Type II restriction enzyme DpnII (288 aa).

Belongs to the DpnII type II restriction endonuclease family. In terms of assembly, homodimer.

The enzyme catalyses Endonucleolytic cleavage of DNA to give specific double-stranded fragments with terminal 5'-phosphates.. A P subtype restriction enzyme that recognizes the double-stranded unmethylated sequence 5'-GATC-3' and cleaves before G-1. This Streptococcus pneumoniae protein is Type II restriction enzyme DpnII.